Reading from the N-terminus, the 248-residue chain is Small ribosomal subunit protein eS1 (248 aa).

The tract at residues 1 to 21 (MAVGKDKRISKGKKGGKKKIV) is disordered.

The protein belongs to the eukaryotic ribosomal protein eS1 family. In terms of assembly, component of the small ribosomal subunit. Mature ribosomes consist of a small (40S) and a large (60S) subunit. The 40S subunit contains about 33 different proteins and 1 molecule of RNA (18S). The 60S subunit contains about 49 different proteins and 3 molecules of RNA (25S, 5.8S and 5S).

The protein localises to the cytoplasm. This Syntrichia ruralis (Great hairy screw-moss) protein is Small ribosomal subunit protein eS1.